A 146-amino-acid polypeptide reads, in one-letter code: Keratin-associated protein 12-2 (146 aa).

Repeat copies occupy residues 10–14 (CQPAC), 15–19 (CAPSP), 20–24 (CQPAC), 25–29 (CVPSS), 34–38 (CCVPV), 40–44 (CQSSV), 45–49 (CVPVS), 55–59 (CLPVS), 60–64 (CQSSV), 65–69 (CVPMS), 70–74 (FKSAV), 75–79 (CVPVS), 80–84 (CQSSV), 85–89 (CVPVS), 90–94 (CRPIV), 95–99 (CAAPS), 100–104 (CQSSL), 105–109 (CVPVS), 110–114 (CRPVV), 120–124 (CQSSG), 125–129 (CCQPS), 130–134 (CTSVL), and 135–139 (CRPIS). Positions 10–139 (CQPACCAPSP…CTSVLCRPIS (130 aa)) are 23 X 5 AA approximate repeats.

The protein belongs to the KRTAP type 12 family. As to quaternary structure, interacts with hair keratins. In terms of tissue distribution, restricted to a narrow region of the hair fiber cuticle, lying approximately 20 cell layers above the apex of the dermal papilla of the hair root; not detected in any other tissues.

Its function is as follows. In the hair cortex, hair keratin intermediate filaments are embedded in an interfilamentous matrix, consisting of hair keratin-associated proteins (KRTAP), which are essential for the formation of a rigid and resistant hair shaft through their extensive disulfide bond cross-linking with abundant cysteine residues of hair keratins. The matrix proteins include the high-sulfur and high-glycine-tyrosine keratins. The protein is Keratin-associated protein 12-2 (KRTAP12-2) of Homo sapiens (Human).